Consider the following 125-residue polypeptide: Histone H2A (125 aa).

Basic residues predominate over residues 1-18 (MSGRGKGGKVKGKSKTRS). The interval 1–23 (MSGRGKGGKVKGKSKTRSSRAGL) is disordered. S2 bears the N-acetylserine mark. N5-methylglutamine is present on Q104.

Belongs to the histone H2A family. As to quaternary structure, the nucleosome is a histone octamer containing two molecules each of H2A, H2B, H3 and H4 assembled in one H3-H4 heterotetramer and two H2A-H2B heterodimers. The octamer wraps approximately 147 bp of DNA.

The protein resides in the nucleus. It localises to the chromosome. Functionally, core component of nucleosome. Nucleosomes wrap and compact DNA into chromatin, limiting DNA accessibility to the cellular machineries which require DNA as a template. Histones thereby play a central role in transcription regulation, DNA repair, DNA replication and chromosomal stability. DNA accessibility is regulated via a complex set of post-translational modifications of histones, also called histone code, and nucleosome remodeling. The polypeptide is Histone H2A (Sepia officinalis (Common cuttlefish)).